The chain runs to 190 residues: Putative 3-methyladenine DNA glycosylase (190 aa).

Belongs to the DNA glycosylase MPG family.

This is Putative 3-methyladenine DNA glycosylase from Deinococcus radiodurans (strain ATCC 13939 / DSM 20539 / JCM 16871 / CCUG 27074 / LMG 4051 / NBRC 15346 / NCIMB 9279 / VKM B-1422 / R1).